The chain runs to 190 residues: Early nodulin-like protein 12 (190 aa).

The signal sequence occupies residues 1-21; the sequence is MGIIVPVLTLVFLLFAKVSHG. The Phytocyanin domain maps to 26–130; it reads RVILVGGSVG…GEKITLVVLA (105 aa). N-linked (GlcNAc...) asparagine glycosylation is present at asparagine 44. Cysteine 84 and cysteine 118 are oxidised to a cystine. The segment at 135 to 164 is disordered; it reads GGGSSSGDAPKVSPVSPTAQTPAPAPGPAA. Over residues 151–164 the composition is skewed to low complexity; it reads PTAQTPAPAPGPAA. Asparagine 167 carries the GPI-anchor amidated asparagine lipid modification. Positions 168–190 are cleaved as a propeptide — removed in mature form; sequence AAVGLKVASGWFLTAVVVGLAMA.

The protein belongs to the early nodulin-like (ENODL) family. In terms of tissue distribution, confined to flowers and siliques. Expressed in female gametophytes.

The protein resides in the cell membrane. May act as a carbohydrate transporter. Required, together with ENODL11, ENODL12, ENODL13, ENODL14 and ENODL15, for male-female communication and pollen tube reception and burst at the synergid cell surface of the female gametophyte. The protein is Early nodulin-like protein 12 of Arabidopsis thaliana (Mouse-ear cress).